The chain runs to 253 residues: Complement C1q subcomponent subunit B (253 aa).

A signal peptide spans 1–27; that stretch reads MMMKIPWGSIPVLMLLLLLGLIDISQA. Q28 bears the Pyrrolidone carboxylic acid mark. Residues P35, P38, P41, P53, and P56 each carry the 4-hydroxyproline modification. 2 consecutive Collagen-like domains span residues 37-86 and 60-114; these read IPGI…PGNP and GEKG…GESG. Residues 38 to 115 are disordered; the sequence is PGIPGIPGTP…APGPKGESGD (78 aa). 5-hydroxylysine is present on residues K59 and K62. P65 is subject to 4-hydroxyproline. A compositionally biased stretch (basic and acidic residues) spans 70–79; sequence DHGEFGEKGD. A 5-hydroxylysine modification is found at K77. The span at 80 to 92 shows a compositional bias: low complexity; it reads PGIPGNPGKVGPK. A 4-hydroxyproline mark is found at P83 and P86. 2 positions are modified to 5-hydroxylysine: K92 and K98. Over residues 96 to 105 the composition is skewed to gly residues; the sequence is GPKGGPGAPG. 4-hydroxyproline occurs at positions 101, 104, and 107. Residue K110 is modified to 5-hydroxylysine. The 137-residue stretch at 117-253 folds into the C1q domain; it reads KATQKIAFSA…GFLLFPDMEA (137 aa). Cysteines 181 and 198 form a disulfide. Ca(2+) is bound by residues D199, Y200, and Q206.

In terms of assembly, core component of the complement C1 complex, a calcium-dependent complex composed of 1 molecule of the C1Q subcomplex, 2 molecules of C1R and 2 molecules of C1S. The C1Q subcomplex is composed 18 subunits: 3 chains of C1QA, C1QB, and C1QC trimerize to form 6 collagen-like triple helices connected to six globular ligand-recognition modules (C1q domain). Post-translationally, hydroxylated on lysine and proline residues. Hydroxylated lysine residues can be glycosylated. Human C1Q contains up to 68.3 hydroxylysine-galactosylglucose residues and up to 2.5 hydroxylysine-galactose per molecule. Total percentage hydroxylysine residues glycosylated is 86.4%.

Its subcellular location is the secreted. The protein localises to the cell surface. The C1Q subcomplex is inhibited by sulfated molecules, such as triterpenoid sulfates, heparan sulfate, or chondroitin sulfates. Core component of the complement C1 complex, a multiprotein complex that initiates the classical pathway of the complement system, a cascade of proteins that leads to phagocytosis and breakdown of pathogens and signaling that strengthens the adaptive immune system. The classical complement pathway is initiated by the C1Q subcomplex of the C1 complex, which specifically binds IgG or IgM immunoglobulins complexed with antigens, forming antigen-antibody complexes on the surface of pathogens: C1QA, together with C1QB and C1QC, specifically recognizes and binds the Fc regions of IgG or IgM via its C1q domain. Immunoglobulin-binding activates the proenzyme C1R, which cleaves C1S, initiating the proteolytic cascade of the complement system. The C1Q subcomplex is activated by a hexamer of IgG complexed with antigens, while it is activated by a pentameric IgM. The C1Q subcomplex also recognizes and binds phosphatidylserine exposed on the surface of cells undergoing programmed cell death, possibly promoting activation of the complement system. The polypeptide is Complement C1q subcomponent subunit B (Homo sapiens (Human)).